Consider the following 485-residue polypeptide: MSLFDHSVSELHKKLNNKEISVTDLVEESYKRIADVEDNVKAFLTLDEENARAKAKELDAKIGAEDNGLLFGMPIGVKDNIVTNGLRTTCASKILANFDPIYDATVVQKLKAADTITIGKLNMDEFAMGSSNENSGFYATKNPWNLDYVPGGSSGGSAAAVAAGEVLFSLGSDTGGSIRQPAAYCGVVGLKPTYGRVSRYGLVAFASSLDQIGPITRTVEDNAYLLQAISGLDRMDATSANVEVGNYLAGLTGDVKGLRIAVPKEYLGEGVGEEARESVLAALKVLEGMGATWEEVSLPHSKYALATYYLLSSSEASANLSRFDGVRYGVRSDNVNNLMDLYKNTRSEGFGDEVKRRIMLGTFALSSGYYDAYYKKAQQVRTLIKNDFENVFANYDVIIGPTTPTPAFKVGEKVDDPMTMYANDILTIPVNLAGVPAISVPCGFGANNMPLGLQIIGKHFDEATIYRVAHAFEQATDYHTKKASL.

Catalysis depends on charge relay system residues Lys-78 and Ser-153. Ser-177 serves as the catalytic Acyl-ester intermediate.

It belongs to the amidase family. GatA subfamily. In terms of assembly, heterotrimer of A, B and C subunits.

The catalysed reaction is L-glutamyl-tRNA(Gln) + L-glutamine + ATP + H2O = L-glutaminyl-tRNA(Gln) + L-glutamate + ADP + phosphate + H(+). In terms of biological role, allows the formation of correctly charged Gln-tRNA(Gln) through the transamidation of misacylated Glu-tRNA(Gln) in organisms which lack glutaminyl-tRNA synthetase. The reaction takes place in the presence of glutamine and ATP through an activated gamma-phospho-Glu-tRNA(Gln). The protein is Glutamyl-tRNA(Gln) amidotransferase subunit A of Bacillus cereus (strain AH820).